The primary structure comprises 136 residues: uncharacterized protein (136 aa).

A signal peptide spans 1–35; it reads MTHRAVPCQPRAFSKIKVLVISFLFLMVAFLPFSS.

This is an uncharacterized protein from Saccharomyces cerevisiae (strain ATCC 204508 / S288c) (Baker's yeast).